The primary structure comprises 331 residues: MITTTALVPARRSAVRTLLATVTEHDGVSPLDEAALLALDGEDARHLLLTADGAATDTHAAEATAGSAASADPADPADPAAPADPADPADETLLGYVSVLGDGTVQGMVDPAHRRRGHGSALLRAALALRPDAGVWVHGALEGSLAFLTDAGLTETRRLLTLRRDLGGAQPLPSAPAPTLEGLRLDTFEESRDAEAWVAVNVRAFADHPEQGALTRADLEQRLAQPWFDAEDMLVALRDETLVGFVWIKREQPGATDRDAEIYVVATDPSVQGHRVAGHLMATVLERLERDGVPGVELYVEADNAPALRLYENWGFEVSGRDVQLRATERG.

1D-myo-inositol 2-(L-cysteinylamino)-2-deoxy-alpha-D-glucopyranoside is bound at residue glutamate 33. The span at 59 to 86 (HAAEATAGSAASADPADPADPAAPADPA) shows a compositional bias: low complexity. The disordered stretch occupies residues 59–89 (HAAEATAGSAASADPADPADPAAPADPADPA). 115–120 (RRGHGS) serves as a coordination point for acetyl-CoA. One can recognise an N-acetyltransferase domain in the interval 183–331 (LRLDTFEESR…DVQLRATERG (149 aa)). The 1D-myo-inositol 2-(L-cysteinylamino)-2-deoxy-alpha-D-glucopyranoside site is built by glutamate 210, lysine 249, and glutamate 261. 265-267 (VAT) contributes to the acetyl-CoA binding site. Tyrosine 299 contacts 1D-myo-inositol 2-(L-cysteinylamino)-2-deoxy-alpha-D-glucopyranoside. 304–309 (NAPALR) contacts acetyl-CoA.

It belongs to the acetyltransferase family. MshD subfamily. Monomer.

The enzyme catalyses 1D-myo-inositol 2-(L-cysteinylamino)-2-deoxy-alpha-D-glucopyranoside + acetyl-CoA = mycothiol + CoA + H(+). Functionally, catalyzes the transfer of acetyl from acetyl-CoA to desacetylmycothiol (Cys-GlcN-Ins) to form mycothiol. The polypeptide is Mycothiol acetyltransferase (Brachybacterium faecium (strain ATCC 43885 / DSM 4810 / JCM 11609 / LMG 19847 / NBRC 14762 / NCIMB 9860 / 6-10)).